Here is a 291-residue protein sequence, read N- to C-terminus: Tyrosine-protein kinase PtkA (291 aa).

Residues methionine 1–proline 79 are disordered. Residues histidine 23 to asparagine 60 are compositionally biased toward polar residues. Tyrosine 262 bears the Phosphotyrosine mark.

Belongs to the HAD-like hydrolase superfamily. CbbY/CbbZ/Gph/YieH family. In terms of assembly, interacts with PtpA. In terms of processing, autophosphorylated.

It carries out the reaction L-tyrosyl-[protein] + ATP = O-phospho-L-tyrosyl-[protein] + ADP + H(+). Required for growth within macrophages. Catalyzes the phosphorylation of PtpA on the tyrosine residues at positions 128 and 129, thereby increasing PtpA phosphatase activity and promoting pathogenicity. This Mycobacterium bovis (strain ATCC BAA-935 / AF2122/97) protein is Tyrosine-protein kinase PtkA.